A 502-amino-acid chain; its full sequence is Protein O-glucosyltransferase 2 (502 aa).

An N-terminal signal peptide occupies residues 1–19; sequence MFGTLLLYCFFLATVPALA. One copy of the Filamin repeat lies at 24 to 130; that stretch reads ERQLSPEKSE…VAKSPYILKG (107 aa). 2 N-linked (GlcNAc...) asparagine glycosylation sites follow: Asn-302 and Asn-414. Residues 499–502 carry the Prevents secretion from ER motif; it reads KDEL.

Belongs to the KDELC family. Post-translationally, N-glycosylated.

The protein localises to the endoplasmic reticulum lumen. The catalysed reaction is L-seryl-[EGF-like domain protein] + UDP-alpha-D-glucose = 3-O-(beta-D-glucosyl)-L-seryl-[EGF-like domain protein] + UDP + H(+). It catalyses the reaction L-seryl-[EGF-like domain protein] + UDP-alpha-D-xylose = 3-O-(beta-D-xylosyl)-L-seryl-[EGF-like domain protein] + UDP + H(+). The protein operates within protein modification; protein glycosylation. Its function is as follows. Protein glucosyltransferase that catalyzes the transfer of glucose from UDP-glucose to a serine residue within the consensus sequence peptide C-X-N-T-X-G-S-F-X-C. Can also catalyze the transfer of xylose from UDP-xylose but less efficiently. Specifically targets extracellular EGF repeats of proteins such as NOTCH1, NOTCH3, FBN1, FBN2 and LTBP1. May regulate the transport of NOTCH1 and NOTCH3 to the plasma membrane and thereby the Notch signaling pathway. This chain is Protein O-glucosyltransferase 2, found in Homo sapiens (Human).